Here is a 390-residue protein sequence, read N- to C-terminus: DNA primase small subunit PriS (390 aa).

Residues aspartate 98, aspartate 100, and aspartate 296 contribute to the active site.

The protein belongs to the eukaryotic-type primase small subunit family. Heterodimer of a small subunit (PriS) and a large subunit (PriL). Requires Mg(2+) as cofactor. It depends on Mn(2+) as a cofactor.

Functionally, catalytic subunit of DNA primase, an RNA polymerase that catalyzes the synthesis of short RNA molecules used as primers for DNA polymerase during DNA replication. The small subunit contains the primase catalytic core and has DNA synthesis activity on its own. Binding to the large subunit stabilizes and modulates the activity, increasing the rate of DNA synthesis while decreasing the length of the DNA fragments, and conferring RNA synthesis capability. The DNA polymerase activity may enable DNA primase to also catalyze primer extension after primer synthesis. May also play a role in DNA repair. The sequence is that of DNA primase small subunit PriS from Methanococcoides burtonii (strain DSM 6242 / NBRC 107633 / OCM 468 / ACE-M).